Reading from the N-terminus, the 218-residue chain is Adenylate kinase (218 aa).

10 to 15 (GAGKGT) contributes to the ATP binding site. Residues 30–59 (STGDMIRETIKSGSVLGQELKKVLDAGELV) are NMP. AMP-binding positions include T31, R36, 57–59 (ELV), and Q92. Residues 122–159 (GRRIHPASGRTYHTKFNPPKVADKDDVTGEPLITRTDD) form an LID region. ATP-binding positions include R123 and 132–133 (TY). AMP contacts are provided by R156 and R167. An ATP-binding site is contributed by Q202.

It belongs to the adenylate kinase family. Monomer.

It localises to the cytoplasm. The enzyme catalyses AMP + ATP = 2 ADP. Its pathway is purine metabolism; AMP biosynthesis via salvage pathway; AMP from ADP: step 1/1. Functionally, catalyzes the reversible transfer of the terminal phosphate group between ATP and AMP. Plays an important role in cellular energy homeostasis and in adenine nucleotide metabolism. In Francisella tularensis subsp. holarctica (strain LVS), this protein is Adenylate kinase.